Consider the following 92-residue polypeptide: Integration host factor subunit beta (92 aa).

This sequence belongs to the bacterial histone-like protein family. Heterodimer of an alpha and a beta chain.

Its function is as follows. This protein is one of the two subunits of integration host factor, a specific DNA-binding protein that functions in genetic recombination as well as in transcriptional and translational control. This Bartonella tribocorum (strain CIP 105476 / IBS 506) protein is Integration host factor subunit beta.